Here is a 267-residue protein sequence, read N- to C-terminus: LysM and putative peptidoglycan-binding domain-containing protein 4 (267 aa).

Residues 1-211 are Extracellular-facing; that stretch reads MRRGDPPPRA…RSNGADWGIQ (211 aa). The segment at 30-64 is disordered; the sequence is HRQEEPEASSEDEELNVMELRPRSRDSSSKEKEGV. Residues 35-45 are compositionally biased toward acidic residues; that stretch reads PEASSEDEELN. The segment covering 49-64 has biased composition (basic and acidic residues); the sequence is LRPRSRDSSSKEKEGV. The LysM domain occupies 70-114; sequence LERDISHEDNLSKLALQYGCKVADIKRVNNLFQEQDMYALKSIKI. N79 carries an N-linked (GlcNAc...) asparagine glycan. The segment at 130–152 is disordered; sequence RTPQQRPSHDAAPSNSAMASVSG. Positions 142 to 152 are enriched in polar residues; it reads PSNSAMASVSG. Residues 212 to 232 form a helical membrane-spanning segment; that stretch reads WWNAVIAMLLIGIVLPIFYVV. The Cytoplasmic segment spans residues 233–267; sequence YYKTKDSGESAVDNVGVNISVSTSNSTREYNGKSP.

Its subcellular location is the membrane. In Danio rerio (Zebrafish), this protein is LysM and putative peptidoglycan-binding domain-containing protein 4 (lysmd4).